The primary structure comprises 166 residues: MANIEKQAGELQEKLIAVNRVSKTVKGGRIMSFTALTVVGDGNGRVGFGYGKAREVPAAIQKAMEKARRNMINVALNEGTLQHPIKGAHTGSRVFMQPASEGTGIIAGGAMRAVLEVAGVRNVLSKAYGSTNPINVVRATIDALANMKSPEMVAAKRGKTVDEILG.

The S5 DRBM domain maps to 11 to 74 (LQEKLIAVNR…EKARRNMINV (64 aa)).

This sequence belongs to the universal ribosomal protein uS5 family. As to quaternary structure, part of the 30S ribosomal subunit. Contacts proteins S4 and S8.

In terms of biological role, with S4 and S12 plays an important role in translational accuracy. Located at the back of the 30S subunit body where it stabilizes the conformation of the head with respect to the body. In Pasteurella multocida (strain Pm70), this protein is Small ribosomal subunit protein uS5.